A 349-amino-acid chain; its full sequence is Ferredoxin--NADP reductase 1 (349 aa).

7 residues coordinate FAD: E36, K44, Y48, V88, L123, D290, and S331.

Belongs to the ferredoxin--NADP reductase type 2 family. In terms of assembly, homodimer. Requires FAD as cofactor.

The enzyme catalyses 2 reduced [2Fe-2S]-[ferredoxin] + NADP(+) + H(+) = 2 oxidized [2Fe-2S]-[ferredoxin] + NADPH. The sequence is that of Ferredoxin--NADP reductase 1 from Bacillus cytotoxicus (strain DSM 22905 / CIP 110041 / 391-98 / NVH 391-98).